Reading from the N-terminus, the 73-residue chain is UPF0150 protein ssl0259 (73 aa).

The protein belongs to the UPF0150 family.

The sequence is that of UPF0150 protein ssl0259 from Synechocystis sp. (strain ATCC 27184 / PCC 6803 / Kazusa).